The primary structure comprises 466 residues: Ribulose bisphosphate carboxylase large chain (466 aa).

Lys5 bears the N6,N6,N6-trimethyllysine mark. Residues Asn114 and Thr164 each contribute to the substrate site. Residue Lys166 is the Proton acceptor of the active site. Position 168 (Lys168) interacts with substrate. Lys192, Asp194, and Glu195 together coordinate Mg(2+). Lys192 carries the N6-carboxylysine modification. His285 (proton acceptor) is an active-site residue. Substrate-binding residues include Arg286, His318, and Ser370.

The protein belongs to the RuBisCO large chain family. Type I subfamily. As to quaternary structure, heterohexadecamer of 8 large chains and 8 small chains; disulfide-linked. The disulfide link is formed within the large subunit homodimers. Mg(2+) serves as cofactor. In terms of processing, the disulfide bond which can form in the large chain dimeric partners within the hexadecamer appears to be associated with oxidative stress and protein turnover.

It is found in the plastid. The protein localises to the chloroplast. The enzyme catalyses 2 (2R)-3-phosphoglycerate + 2 H(+) = D-ribulose 1,5-bisphosphate + CO2 + H2O. The catalysed reaction is D-ribulose 1,5-bisphosphate + O2 = 2-phosphoglycolate + (2R)-3-phosphoglycerate + 2 H(+). In terms of biological role, ruBisCO catalyzes two reactions: the carboxylation of D-ribulose 1,5-bisphosphate, the primary event in carbon dioxide fixation, as well as the oxidative fragmentation of the pentose substrate in the photorespiration process. Both reactions occur simultaneously and in competition at the same active site. This Asarum canadense (Wild ginger) protein is Ribulose bisphosphate carboxylase large chain.